Consider the following 301-residue polypeptide: Beta-1,3-galactosyltransferase 5 (301 aa).

The Cytoplasmic portion of the chain corresponds to 1 to 7 (MAFPKMR). The chain crosses the membrane as a helical; Signal-anchor for type II membrane protein span at residues 8–28 (LMYVCLLVLGALCLYFSMYSL). The Lumenal segment spans residues 29 to 301 (NLFKEQSFVY…LLDYWQALEN (273 aa)). N-linked (GlcNAc...) asparagine glycans are attached at residues Asn-130, Asn-174, and Asn-231.

It belongs to the glycosyltransferase 31 family.

It is found in the golgi apparatus membrane. The catalysed reaction is a globoside Gb4Cer (d18:1(4E)) + UDP-alpha-D-galactose = a globoside GalGb4Cer (d18:1(4E)) + UDP + H(+). The protein operates within protein modification; protein glycosylation. In terms of biological role, catalyzes the transfer of Gal to GlcNAc-based acceptors with a preference for the core3 O-linked glycan GlcNAc(beta1,3)GalNAc structure. Can use glycolipid LC3Cer as an efficient acceptor. The chain is Beta-1,3-galactosyltransferase 5 (B3GALT5) from Pan paniscus (Pygmy chimpanzee).